Consider the following 330-residue polypeptide: Glycine betaine/proline betaine-binding periplasmic protein (330 aa).

The signal sequence occupies residues 1–21; it reads MRHSVLFATAFATLISTQTFA. Substrate is bound by residues Trp-86, His-90, and 161–163; that span reads WGC. Residues Cys-157 and Cys-163 are joined by a disulfide bond.

The complex is composed of two ATP-binding proteins (ProV), two transmembrane proteins (ProW) and a solute-binding protein (ProX).

The protein localises to the periplasm. Functionally, part of the ProU ABC transporter complex involved in glycine betaine and proline betaine uptake. Binds glycine betaine and proline betaine with high affinity. This chain is Glycine betaine/proline betaine-binding periplasmic protein, found in Escherichia coli (strain K12).